The chain runs to 882 residues: Isoamylase 2, chloroplastic (882 aa).

Residues 1–70 (MAAWSPSVGI…LQSYQFSKIC (70 aa)) constitute a chloroplast transit peptide.

Belongs to the glycosyl hydrolase 13 family. In terms of assembly, associates with ISA1 to form the heteromultimeric complex Iso1 required for amylopectin synthesis.

It is found in the plastid. Its subcellular location is the chloroplast. It functions in the pathway glycan biosynthesis; starch biosynthesis. In terms of biological role, involved in the trimming of pre-amylopectin chains. Accelerates the crystallization of nascent amylopectin molecules during starch synthesis. ISA1 and ISA2 work exclusively together as a multimeric holoenzyme. ISA1-ISA2 removes preferentially branches that are very close to other branches. This Arabidopsis thaliana (Mouse-ear cress) protein is Isoamylase 2, chloroplastic (ISA2).